A 187-amino-acid polypeptide reads, in one-letter code: Epididymal-specific lipocalin-10 (187 aa).

Positions 1–19 (MRQGLLVLALVLVLVLVLA) are cleaved as a signal peptide. Cys-90 and Cys-163 are disulfide-bonded. N-linked (GlcNAc...) asparagine glycosylation is present at Asn-149. Lys-170 carries the N6-acetyllysine modification.

Belongs to the calycin superfamily. Lipocalin family.

It is found in the secreted. Functionally, may play a role in male fertility. May act as a retinoid carrier protein within the epididymis. The protein is Epididymal-specific lipocalin-10 (LCN10) of Homo sapiens (Human).